Reading from the N-terminus, the 330-residue chain is tRNA (cytosine(38)-C(5))-methyltransferase (330 aa).

Positions 7–330 constitute an SAM-dependent MTase C5-type domain; that stretch reads LRVLELYSGI…ISLLLEPLNF (324 aa). The active site involves Cys81.

This sequence belongs to the class I-like SAM-binding methyltransferase superfamily. C5-methyltransferase family.

Its subcellular location is the cytoplasm. The protein localises to the nucleus. The enzyme catalyses cytidine(38) in tRNA + S-adenosyl-L-methionine = 5-methylcytidine(38) in tRNA + S-adenosyl-L-homocysteine + H(+). In terms of biological role, specifically methylates cytosine 38 in the anticodon loop of tRNA(Asp). Can also methylate cytosine 38 in tRNA(Glu), albeit to a lower level, but not tRNA(Lys). Pmt1-dependent tRNA methylation is induced by nitrogen limitation and depends on the nutrient-sensing protein kinase sck2. Does not have DNA-methylation activity. In Schizosaccharomyces pombe (strain 972 / ATCC 24843) (Fission yeast), this protein is tRNA (cytosine(38)-C(5))-methyltransferase (pmt1).